A 137-amino-acid polypeptide reads, in one-letter code: Pro-corazonin (137 aa).

Positions 1–20 (MKHVFSTSLIVSLFVIFTDA) are cleaved as a signal peptide. Gln-21 carries the pyrrolidone carboxylic acid modification. Position 31 is an asparagine amide (Asn-31). Positions 68–137 (FLKSPCDVRL…RLLNDGMHRL (70 aa)) are excised as a propeptide.

The protein belongs to the corazonin family.

It is found in the secreted. Functionally, cardioactive peptide. Corazonin is probably involved in the physiological regulation of the heart beat. In Aedes aegypti (Yellowfever mosquito), this protein is Pro-corazonin.